The following is a 229-amino-acid chain: Probable septum site-determining protein MinC (229 aa).

Belongs to the MinC family. In terms of assembly, interacts with MinD and FtsZ.

Functionally, cell division inhibitor that blocks the formation of polar Z ring septums. Rapidly oscillates between the poles of the cell to destabilize FtsZ filaments that have formed before they mature into polar Z rings. Prevents FtsZ polymerization. This Ruminiclostridium cellulolyticum (strain ATCC 35319 / DSM 5812 / JCM 6584 / H10) (Clostridium cellulolyticum) protein is Probable septum site-determining protein MinC.